The chain runs to 302 residues: Lactoylglutathione lyase (302 aa).

2 VOC domains span residues 11–153 and 166–301; these read KLNH…LVSQ and RFNH…VIEQ. Residue His-14 participates in Zn(2+) binding. Arg-18 serves as a coordination point for substrate. Position 75 (Glu-75) interacts with Zn(2+). Positions 79, 99, and 103 each coordinate substrate. The Zn(2+) site is built by His-103 and Glu-149. Glu-149 (proton donor/acceptor) is an active-site residue.

It belongs to the glyoxalase I family. Monomer. Requires Zn(2+) as cofactor. The cofactor is Cu(2+). Ni(2+) is required as a cofactor. Mn(2+) serves as cofactor.

The enzyme catalyses (R)-S-lactoylglutathione = methylglyoxal + glutathione. It participates in secondary metabolite metabolism; methylglyoxal degradation; (R)-lactate from methylglyoxal: step 1/2. Catalyzes the conversion of hemimercaptal, formed from methylglyoxal and glutathione, to S-lactoylglutathione. In Schizosaccharomyces pombe (strain 972 / ATCC 24843) (Fission yeast), this protein is Lactoylglutathione lyase (glo1).